Here is a 115-residue protein sequence, read N- to C-terminus: Large ribosomal subunit protein bL19 (115 aa).

This sequence belongs to the bacterial ribosomal protein bL19 family.

This protein is located at the 30S-50S ribosomal subunit interface and may play a role in the structure and function of the aminoacyl-tRNA binding site. This Hydrogenovibrio crunogenus (strain DSM 25203 / XCL-2) (Thiomicrospira crunogena) protein is Large ribosomal subunit protein bL19.